Here is a 272-residue protein sequence, read N- to C-terminus: Phosphoglycolate phosphatase (272 aa).

D19 (nucleophile) is an active-site residue. Mg(2+)-binding residues include D19, D21, and D182.

The protein belongs to the HAD-like hydrolase superfamily. CbbY/CbbZ/Gph/YieH family. Mg(2+) is required as a cofactor.

The catalysed reaction is 2-phosphoglycolate + H2O = glycolate + phosphate. It participates in organic acid metabolism; glycolate biosynthesis; glycolate from 2-phosphoglycolate: step 1/1. Specifically catalyzes the dephosphorylation of 2-phosphoglycolate. Is involved in the dissimilation of the intracellular 2-phosphoglycolate formed during the DNA repair of 3'-phosphoglycolate ends, a major class of DNA lesions induced by oxidative stress. This Pseudomonas syringae pv. syringae (strain B728a) protein is Phosphoglycolate phosphatase.